Consider the following 141-residue polypeptide: Auxin-responsive protein SAUR61 (141 aa).

This sequence belongs to the ARG7 family.

The protein resides in the cell membrane. Its function is as follows. May promote auxin-stimulated organ elongation, such as hypocotyls, stamen filaments and petals. The protein is Auxin-responsive protein SAUR61 of Arabidopsis thaliana (Mouse-ear cress).